A 264-amino-acid chain; its full sequence is MDTRPIGFLDSGVGGLTVVCELIRQLPHEKIVYIGDSARAPYGPRPKKQIKEYTWELVNFLLTQNVKMIVFACNTATAVAWEEVKAALDIPVLGVVLPGASAAIKSTTKGQVGVIGTPMTVASDIYRKKIQLLAPSVQVRSLACPKFVPIVESNEMCSSIAKKIVYDSLSPLVGKIDTLVLGCTHYPLLRPIIQNVMGPSVKLIDSGAECVRDISVLLNYFDINGNYHQKAVEHRFFTTANPEIFQEIASIWLKQKINVEHVTL.

Residues 10 to 11 (DS) and 42 to 43 (YG) contribute to the substrate site. Residue cysteine 73 is the Proton donor/acceptor of the active site. Position 74–75 (74–75 (NT)) interacts with substrate. The Proton donor/acceptor role is filled by cysteine 183. 184-185 (TH) contributes to the substrate binding site.

Belongs to the aspartate/glutamate racemases family.

The enzyme catalyses L-glutamate = D-glutamate. It participates in cell wall biogenesis; peptidoglycan biosynthesis. Provides the (R)-glutamate required for cell wall biosynthesis. This Streptococcus pyogenes serotype M18 (strain MGAS8232) protein is Glutamate racemase.